We begin with the raw amino-acid sequence, 182 residues long: Transmembrane and coiled-coil domain-containing protein 2 (182 aa).

A run of 2 helical transmembrane segments spans residues 10 to 30 (IIIDYLSLSSIWNYLQATLLG) and 50 to 70 (VQVILGISFLILLGVGMYALW). Residues 122 to 149 (GLQEKILKKLQTVENKVKDLEGMIISQK) adopt a coiled-coil conformation.

Its subcellular location is the membrane. The sequence is that of Transmembrane and coiled-coil domain-containing protein 2 (TMCO2) from Bos taurus (Bovine).